The chain runs to 211 residues: Interleukin-6 (211 aa).

Positions 1–24 (MKFLSARDFHPVAFLGLMLVTTTA) are cleaved as a signal peptide. Cystine bridges form between C70–C76 and C99–C109.

This sequence belongs to the IL-6 superfamily. In terms of assembly, component of a hexamer of two molecules each of IL6, IL6R and IL6ST; first binds to IL6R to associate with the signaling subunit IL6ST. Interacts with IL6R (via the N-terminal ectodomain); this interaction may be affected by IL6R-binding with SORL1, hence decreasing IL6 cis signaling. Interacts with SORL1 (via the N-terminal ectodomain); this interaction leads to IL6 internalization and lysosomal degradation. May form a trimeric complex with the soluble SORL1 ectodomain and soluble IL6R receptor; this interaction might stabilize circulating IL6, hence promoting IL6 trans signaling. In terms of processing, N- and O-glycosylated. As to expression, expressed by dendritic cells and macrophages. Expressed by activated follicular B cells. Abundantly expressed in the central nervous system (CNS), particularly the hypothalamic region.

It localises to the secreted. Cytokine with a wide variety of biological functions in immunity, tissue regeneration, and metabolism. Binds to IL6R, then the complex associates to the signaling subunit IL6ST/gp130 to trigger the intracellular IL6-signaling pathway. The interaction with the membrane-bound IL6R and IL6ST stimulates 'classic signaling', whereas the binding of IL6 and soluble IL6R to IL6ST stimulates 'trans-signaling'. Alternatively, 'cluster signaling' occurs when membrane-bound IL6:IL6R complexes on transmitter cells activate IL6ST receptors on neighboring receiver cells. Its function is as follows. IL6 is a potent inducer of the acute phase response. Rapid production of IL6 contributes to host defense during infection and tissue injury, but excessive IL6 synthesis is involved in disease pathology. In the innate immune response, is synthesized by myeloid cells, such as macrophages and dendritic cells, upon recognition of pathogens through toll-like receptors (TLRs) at the site of infection or tissue injury. In the adaptive immune response, is required for the differentiation of B-cells into immunoglolin-secreting cells. Plays a major role in the differentiation of CD4(+) T cell subsets. Essential factor for the development of T follicular helper (Tfh) cells that are required for the induction of germinal-center formation. Together with IL21, controls the early generation of Tfh cells and are critical for an effective antibody response to acute viral infection. Required to drive naive CD4(+) T cells to the Th17 lineage, through 'cluster signaling' by dendritic cells. Also required for proliferation of myeloma cells and the survival of plasmablast cells. Functionally, acts as an essential factor in bone homeostasis and on vessels directly or indirectly by induction of VEGF, resulting in increased angiogenesis activity and vascular permeability. Induces, through 'trans-signaling' and synergistically with IL1B and TNF, the production of VEGF. Involved in metabolic controls, is discharged into the bloodstream after muscle contraction increasing lipolysis and improving insulin resistance. 'Trans-signaling' in central nervous system regulates energy and glucose homeostasis. Mediates, through GLP-1, crosstalk between insulin-sensitive tissues, intestinal L cells and pancreatic islets to adapt to changes in insulin demand. Also acts as a myokine. Plays a protective role during liver injury, being required for maintenance of tissue regeneration. Also has a pivotal role in iron metabolism by regulating HAMP/hepcidin expression upon inflammation or bacterial infection. Through activation of IL6ST-YAP-NOTCH pathway, induces inflammation-induced epithelial regeneration. In Mus musculus (Mouse), this protein is Interleukin-6.